The sequence spans 385 residues: DNA replication and repair protein RecF (385 aa).

30–37 contacts ATP; it reads GPNGYGKT.

It belongs to the RecF family.

It is found in the cytoplasm. Its function is as follows. The RecF protein is involved in DNA metabolism; it is required for DNA replication and normal SOS inducibility. RecF binds preferentially to single-stranded, linear DNA. It also seems to bind ATP. The polypeptide is DNA replication and repair protein RecF (Mycobacterium tuberculosis (strain ATCC 25177 / H37Ra)).